Here is a 465-residue protein sequence, read N- to C-terminus: Protein CitXG (465 aa).

An apo-citrate lyase phosphoribosyl-dephospho-CoA transferase region spans residues 1 to 182 (MQHFFTTFST…QSLAQNHDFA (182 aa)). Residues 183–465 (EHIGEQVYLA…TIFFLSFRGN (283 aa)) are 2-(5''-triphosphoribosyl)-3'-dephosphocoenzyme-A synthase.

This sequence in the N-terminal section; belongs to the CitX family. The protein in the C-terminal section; belongs to the CitG/MdcB family.

The enzyme catalyses apo-[citrate lyase ACP] + 2'-(5''-triphospho-alpha-D-ribosyl)-3'-dephospho-CoA = holo-[citrate lyase ACP] + diphosphate. It carries out the reaction 3'-dephospho-CoA + ATP = 2'-(5''-triphospho-alpha-D-ribosyl)-3'-dephospho-CoA + adenine. In terms of biological role, bifunctional enzyme that catalyzes formation of 2-(5''-triphosphoribosyl)-3'-dephosphocoenzyme-A, and then the transfer of this prosthetic group precursor to the apo-acyl carrier protein (gamma chain) of the citrate lyase to yield the holo-acyl carrier protein. This is Protein CitXG (citXG) from Haemophilus influenzae (strain ATCC 51907 / DSM 11121 / KW20 / Rd).